A 218-amino-acid chain; its full sequence is Glutathione S-transferase Mu 4 (218 aa).

The GST N-terminal domain maps to 1-88 (MPMTLGYWDI…YIARKHNLCG (88 aa)). Residues 7 to 8 (YW), 46 to 50 (WLSEK), 59 to 60 (NL), and 72 to 73 (QS) contribute to the glutathione site. One can recognise a GST C-terminal domain in the interval 90–208 (TEEEKIRVDI…KTSRFLRTPL (119 aa)). Tyr-116 is a substrate binding site.

The protein belongs to the GST superfamily. Mu family. Homodimer. In terms of tissue distribution, widely expressed.

It is found in the cytoplasm. The enzyme catalyses RX + glutathione = an S-substituted glutathione + a halide anion + H(+). The catalysed reaction is 1-chloro-2,4-dinitrobenzene + glutathione = 2,4-dinitrophenyl-S-glutathione + chloride + H(+). It carries out the reaction (13S,14S)-epoxy-(4Z,7Z,9E,11E,16Z,19Z)-docosahexaenoate + glutathione = (13R)-S-glutathionyl-(14S)-hydroxy-(4Z,7Z,9E,11E,16Z,19Z)-docosahexaenoate. It catalyses the reaction leukotriene C4 = leukotriene A4 + glutathione. Its function is as follows. Conjugation of reduced glutathione to a wide number of exogenous and endogenous hydrophobic electrophiles. Catalyzes the conjugation of leukotriene A4 with reduced glutathione (GSH) to form leukotriene C4. Can also catalyze the transfer of a glutathionyl group from glutathione (GSH) to 13(S),14(S)-epoxy-docosahexaenoic acid to form maresin conjugate in tissue regeneration 1 (MCTR1), a bioactive lipid mediator that possess potent anti-inflammatory and proresolving actions. In Mus musculus (Mouse), this protein is Glutathione S-transferase Mu 4.